Reading from the N-terminus, the 311-residue chain is Iron-binding protein YfeA (311 aa).

The N-terminal stretch at 1-31 is a signal peptide; the sequence is MIERLNSPFLRAAALFTIVAFSSLISTAALA. Fe(2+)-binding residues include histidine 76, histidine 141, glutamate 207, and aspartate 282.

Belongs to the bacterial solute-binding protein 9 family. In terms of assembly, monomer.

It localises to the periplasm. In terms of biological role, part of the ATP-binding cassette (ABC) transport system YfeABC involved in iron import. Binds iron with high affinity and specificity and delivers it to the membrane permease for translocation into the cytoplasm. Also binds Mn(2+) and Zn(2+). This is Iron-binding protein YfeA (yfeA) from Yersinia pestis.